Consider the following 612-residue polypeptide: Amyloid-beta precursor-like protein (612 aa).

Positions 1–21 (MGPSVRPGFLVVVIGLQFVAA) are cleaved as a signal peptide. The Extracellular segment spans residues 22-542 (SMEVNSRKFE…NLYANSHANS (521 aa)). The segment at 28 to 122 (RKFEPMVAFI…PFRCLVGPFQ (95 aa)) is GFLD subdomain. The region spanning 28–189 (RKFEPMVAFI…SGVEFVCCPK (162 aa)) is the E1 domain. Disulfide bonds link C38/C60, C71/C116, C96/C103, C132/C187, C143/C173, and C157/C186. N99, N108, and N150 each carry an N-linked (GlcNAc...) asparagine glycan. The tract at residues 130–189 (EHCIFDHYHDPRVCNEFDQCNETAMSKCSARGMTTQSFAMLWPCQEPGHFSGVEFVCCPK) is cuBD subdomain. The region spanning 223-419 (GDSKYMSKYA…KQVRPNIDKF (197 aa)) is the E2 domain. Disordered regions lie at residues 251 to 276 (ERDTKMMKDWKAARDSVREKKKTDPK) and 437 to 490 (QEPT…FDSE). 2 stretches are compositionally biased toward basic and acidic residues: residues 439–453 (PTPKEAPVETQKAED) and 470–483 (KPTEARPEQQEDIK). Residues 543–563 (VLGIAIGGVVVFIIIVVAVVM) form a helical membrane-spanning segment. Topologically, residues 564 to 612 (LKRRTQRQRVTHGFVEVDPAASPEERHVANMQMSGYENPTYKYFEMQNQ) are cytoplasmic. Residues 598-612 (GYENPTYKYFEMQNQ) form a required for the interaction with kinesin heavy chain and for anterograde transport in axons region. The YENPXY motif signature appears at 599 to 604 (YENPTY).

The protein belongs to the APP family. Interacts (via cytoplasmic domain) with kinesin heavy chain. Expressed in the cervicothoracic ganglion (stellate ganglion) (at protein level).

The protein localises to the cell membrane. The protein resides in the cell projection. Its subcellular location is the axon. Acts as a kinesin I membrane receptor, thereby playing a role in axonal anterograde transport of cargo towards synapses in axons. In Doryteuthis pealeii (Longfin inshore squid), this protein is Amyloid-beta precursor-like protein.